The following is a 105-amino-acid chain: ATP synthase subunit c (105 aa).

3 consecutive transmembrane segments (helical) span residues 3-23 (FLAL…GGMG), 32-52 (SILG…IGMG), and 78-98 (VAMA…IIAI).

This sequence belongs to the ATPase C chain family. In terms of assembly, F-type ATPases have 2 components, F(1) - the catalytic core - and F(0) - the membrane proton channel. F(1) has five subunits: alpha(3), beta(3), gamma(1), delta(1), epsilon(1). F(0) has three main subunits: a(1), b(2) and c(10-14). The alpha and beta chains form an alternating ring which encloses part of the gamma chain. F(1) is attached to F(0) by a central stalk formed by the gamma and epsilon chains, while a peripheral stalk is formed by the delta and b chains.

It is found in the cell inner membrane. Its function is as follows. F(1)F(0) ATP synthase produces ATP from ADP in the presence of a proton or sodium gradient. F-type ATPases consist of two structural domains, F(1) containing the extramembraneous catalytic core and F(0) containing the membrane proton channel, linked together by a central stalk and a peripheral stalk. During catalysis, ATP synthesis in the catalytic domain of F(1) is coupled via a rotary mechanism of the central stalk subunits to proton translocation. Key component of the F(0) channel; it plays a direct role in translocation across the membrane. A homomeric c-ring of between 10-14 subunits forms the central stalk rotor element with the F(1) delta and epsilon subunits. In Helicobacter pylori (strain P12), this protein is ATP synthase subunit c.